The primary structure comprises 388 residues: Angiopoietin-related protein 5 (388 aa).

The N-terminal stretch at 1–25 is a signal peptide; the sequence is MMSPSQASLLFLNVCIFICGEAVQG. An N-linked (GlcNAc...) asparagine glycan is attached at Asn53. The stretch at 98–123 forms a coiled coil; sequence LRNMMDEQQASLDYLSNQVNELMNRV. Residues 141 to 383 enclose the Fibrinogen C-terminal domain; the sequence is RPVQSHGLDC…SVSMKIRRMY (243 aa). Asn238 is a glycosylation site (N-linked (GlcNAc...) asparagine). 2 disulfides stabilise this stretch: Cys310–Cys314 and Cys324–Cys338. Residue Asn329 is glycosylated (N-linked (GlcNAc...) asparagine).

In terms of tissue distribution, mainly expressed in adult heart.

It is found in the secreted. The protein is Angiopoietin-related protein 5 (ANGPTL5) of Homo sapiens (Human).